The sequence spans 286 residues: NFU1 iron-sulfur cluster scaffold homolog, mitochondrial (286 aa).

Residues 1 to 66 (MSKLLTNTAL…RQIQLSGARN (66 aa)) constitute a mitochondrion transit peptide. A nifU region spans residues 182–250 (IKELLDTRIR…IPEVESVEQV (69 aa)). [4Fe-4S] cluster contacts are provided by Cys219 and Cys222.

Belongs to the NifU family.

It is found in the mitochondrion. Functionally, molecular scaffold for [Fe-S] cluster assembly of mitochondrial iron-sulfur proteins. The polypeptide is NFU1 iron-sulfur cluster scaffold homolog, mitochondrial (Drosophila ananassae (Fruit fly)).